Consider the following 344-residue polypeptide: L-rhamnose-proton symporter (344 aa).

10 helical membrane-spanning segments follow: residues 4–24 (AITMGIFWHLIGAASAACFYA), 38–58 (WSVGGIVSWIILPWAISALLL), 74–94 (LPVFLFGAMWGIGNINYGLTM), 101–121 (MGIGIAIGITLIVGTLMTPII), 137–157 (TLLGVLVALIGVGIVTRAGQL), 175–195 (LVLAVMCGIFSAGMSFAMNAA), 214–234 (LPSYVVIMGGGAIINLGFCFI), 259–279 (VLLSTLGGLMWYLQFFFYAWG), 290–310 (ISWMLHMSFYVLCGGIVGLVL), and 323–343 (VLSLGCVVIIVAANIVGIGMA).

It belongs to the L-rhamnose transporter (TC 2.A.7.6) family.

The protein localises to the cell inner membrane. It catalyses the reaction L-rhamnopyranose(in) + H(+)(in) = L-rhamnopyranose(out) + H(+)(out). Uptake of L-rhamnose across the cytoplasmic membrane with the concomitant transport of protons into the cell (symport system). The protein is L-rhamnose-proton symporter of Escherichia coli (strain K12 / MC4100 / BW2952).